A 407-amino-acid polypeptide reads, in one-letter code: Formate-dependent phosphoribosylglycinamide formyltransferase (407 aa).

N(1)-(5-phospho-beta-D-ribosyl)glycinamide-binding positions include 28–29 (EL) and glutamate 88. Residues arginine 121, lysine 162, 167 to 172 (SSGKGQ), 202 to 205 (EGFI), and glutamate 210 contribute to the ATP site. Positions 126–320 (RLAAEELGVA…EFELHAKAIL (195 aa)) constitute an ATP-grasp domain. 2 residues coordinate Mg(2+): glutamate 279 and glutamate 291. N(1)-(5-phospho-beta-D-ribosyl)glycinamide contacts are provided by residues aspartate 298, lysine 367, and 374–375 (RR).

It belongs to the PurK/PurT family. As to quaternary structure, homodimer.

The catalysed reaction is N(1)-(5-phospho-beta-D-ribosyl)glycinamide + formate + ATP = N(2)-formyl-N(1)-(5-phospho-beta-D-ribosyl)glycinamide + ADP + phosphate + H(+). Its pathway is purine metabolism; IMP biosynthesis via de novo pathway; N(2)-formyl-N(1)-(5-phospho-D-ribosyl)glycinamide from N(1)-(5-phospho-D-ribosyl)glycinamide (formate route): step 1/1. Involved in the de novo purine biosynthesis. Catalyzes the transfer of formate to 5-phospho-ribosyl-glycinamide (GAR), producing 5-phospho-ribosyl-N-formylglycinamide (FGAR). Formate is provided by PurU via hydrolysis of 10-formyl-tetrahydrofolate. The chain is Formate-dependent phosphoribosylglycinamide formyltransferase from Herminiimonas arsenicoxydans.